We begin with the raw amino-acid sequence, 498 residues long: ATP synthase subunit beta, chloroplastic (498 aa).

An ATP-binding site is contributed by 172 to 179 (GGAGVGKT).

This sequence belongs to the ATPase alpha/beta chains family. In terms of assembly, F-type ATPases have 2 components, CF(1) - the catalytic core - and CF(0) - the membrane proton channel. CF(1) has five subunits: alpha(3), beta(3), gamma(1), delta(1), epsilon(1). CF(0) has four main subunits: a(1), b(1), b'(1) and c(9-12).

Its subcellular location is the plastid. It localises to the chloroplast thylakoid membrane. It catalyses the reaction ATP + H2O + 4 H(+)(in) = ADP + phosphate + 5 H(+)(out). Produces ATP from ADP in the presence of a proton gradient across the membrane. The catalytic sites are hosted primarily by the beta subunits. The polypeptide is ATP synthase subunit beta, chloroplastic (Carica papaya (Papaya)).